Consider the following 142-residue polypeptide: MKTFVAKPETVKRDWYVVDAEGKTLGRLASEIASRLRGKHKAEYTPHVDTGDYIIVVNAEKVAVTGNKAKGKVYYRHSEFPGGLKTITFEKLIAKKPEMVLELAVKGMLPRGPLGRAMYRKLKVYAGTEHNHVAQQPQVLDI.

This sequence belongs to the universal ribosomal protein uL13 family. Part of the 50S ribosomal subunit.

This protein is one of the early assembly proteins of the 50S ribosomal subunit, although it is not seen to bind rRNA by itself. It is important during the early stages of 50S assembly. The chain is Large ribosomal subunit protein uL13 from Vibrio atlanticus (strain LGP32) (Vibrio splendidus (strain Mel32)).